The chain runs to 795 residues: Levansucrase (795 aa).

Residues Met-1 to Ala-36 form the signal peptide. 2 stretches are compositionally biased toward polar residues: residues Thr-42–Glu-66 and Gln-112–Asn-130. Disordered stretches follow at residues Thr-42–Ala-83 and Glu-103–Glu-138. Sucrose contacts are provided by Trp-245, Asp-246, and Ser-315. Asp-246 acts as the Nucleophile in catalysis. Asp-394 serves as a coordination point for Ca(2+). Sucrose-binding residues include Arg-399 and Asp-400. Residues Gln-425, Asn-464, and Asp-496 each contribute to the Ca(2+) site. Glu-497 contributes to the sucrose binding site. Glu-499 acts as the Proton donor/acceptor in catalysis. Position 517 (Arg-517) interacts with sucrose. The chain crosses the membrane as a helical span at residues Gly-774–Phe-794.

This sequence belongs to the glycosyl hydrolase 68 family.

The protein localises to the cell membrane. It localises to the cell surface. It carries out the reaction [6)-beta-D-fructofuranosyl-(2-&gt;](n) alpha-D-glucopyranoside + sucrose = [6)-beta-D-fructofuranosyl-(2-&gt;](n+1) alpha-D-glucopyranoside + D-glucose. Ca(2+) may play an important structural role and promote stability of levansucrase. Functionally, catalyzes the synthesis of levan, a fructose polymer, by transferring the fructosyl moiety from sucrose to a growing acceptor molecule. Also displays sucrose hydrolase activity. This chain is Levansucrase, found in Streptococcus mutans serotype c (strain ATCC 700610 / UA159).